The primary structure comprises 114 residues: MSKKMFGEIMRQAQKIQEEIQKKQEEVKKMTVEATSGGGMVTVQANGAGEIVSIKIDREVVNPDDIEMLEDLVLAAVNEAIKRAHELAQSEMAKVSMPFNLPGMPDLSSLFGKL.

Belongs to the YbaB/EbfC family. In terms of assembly, homodimer.

It localises to the cytoplasm. The protein localises to the nucleoid. In terms of biological role, binds to DNA and alters its conformation. May be involved in regulation of gene expression, nucleoid organization and DNA protection. This chain is Nucleoid-associated protein THEYE_A1069, found in Thermodesulfovibrio yellowstonii (strain ATCC 51303 / DSM 11347 / YP87).